A 477-amino-acid polypeptide reads, in one-letter code: Sulfate adenylyltransferase subunit 1 (477 aa).

The tr-type G domain occupies 22–239 (KDMLRFITCG…TVQISHDAPL (218 aa)). The segment at 31–38 (GSVDDGKS) is G1. 31-38 (GSVDDGKS) contacts GTP. The segment at 89–93 (GITID) is G2. Positions 110–113 (DCPG) are G3. GTP-binding positions include 110 to 114 (DCPGH) and 165 to 168 (NKMD). Positions 165–168 (NKMD) are G4. Residues 202–204 (SAL) are G5.

The protein belongs to the TRAFAC class translation factor GTPase superfamily. Classic translation factor GTPase family. CysN/NodQ subfamily. In terms of assembly, heterodimer composed of CysD, the smaller subunit, and CysN.

The enzyme catalyses sulfate + ATP + H(+) = adenosine 5'-phosphosulfate + diphosphate. It functions in the pathway sulfur metabolism; hydrogen sulfide biosynthesis; sulfite from sulfate: step 1/3. Its function is as follows. With CysD forms the ATP sulfurylase (ATPS) that catalyzes the adenylation of sulfate producing adenosine 5'-phosphosulfate (APS) and diphosphate, the first enzymatic step in sulfur assimilation pathway. APS synthesis involves the formation of a high-energy phosphoric-sulfuric acid anhydride bond driven by GTP hydrolysis by CysN coupled to ATP hydrolysis by CysD. The protein is Sulfate adenylyltransferase subunit 1 of Chromobacterium violaceum (strain ATCC 12472 / DSM 30191 / JCM 1249 / CCUG 213 / NBRC 12614 / NCIMB 9131 / NCTC 9757 / MK).